The chain runs to 456 residues: RuvB-like helicase 1 (456 aa).

70 to 77 (GPPGTGKT) lines the ATP pocket.

The protein belongs to the RuvB family. In terms of assembly, forms homohexameric rings. May form a dodecamer with rept made of two stacked hexameric rings. Component of the chromatin remodeling Ino80 complex. Interacts with Myc and rept. As to expression, higher expression occurs in primordia of mesoderm, anterior and posterior midgut and cephalic furrow early in gastrulation, as well as in endoderm and mesoderm lineages during germ band extension. Later in development expression is only maintained in endoderm cells. Expressed in thoracic and abdominal segment neural precursors of all embryonic chordotonal organs.

Its subcellular location is the nucleus. It carries out the reaction ATP + H2O = ADP + phosphate + H(+). Functionally, acts as a transcriptional coactivator in Wg signaling caused by altered arm signaling. Pont and rept interfere antagonistically with nuclear arm signaling function, and are required to enhance or reduce arm activity, respectively. Also an essential cofactor for the normal function of Myc; required for cellular proliferation and growth. Its function is as follows. Proposed core component of the chromatin remodeling Ino80 complex which is involved in transcriptional regulation, DNA replication and probably DNA repair. This is RuvB-like helicase 1 from Drosophila melanogaster (Fruit fly).